A 360-amino-acid chain; its full sequence is Peptide chain release factor 1 (360 aa).

Glutamine 237 carries the post-translational modification N5-methylglutamine.

It belongs to the prokaryotic/mitochondrial release factor family. In terms of processing, methylated by PrmC. Methylation increases the termination efficiency of RF1.

It localises to the cytoplasm. Peptide chain release factor 1 directs the termination of translation in response to the peptide chain termination codons UAG and UAA. The protein is Peptide chain release factor 1 of Cellvibrio japonicus (strain Ueda107) (Pseudomonas fluorescens subsp. cellulosa).